Consider the following 550-residue polypeptide: Metal transporter Nramp3 (550 aa).

Polar residues predominate over residues 1–26; that stretch reads MSGPMQRSSQPQFISSVERNNQSNGP. A disordered region spans residues 1–30; it reads MSGPMQRSSQPQFISSVERNNQSNGPGTPL. The next 12 membrane-spanning stretches (helical) occupy residues 50–70, 83–103, 127–147, 158–178, 185–205, 233–253, 276–296, 333–353, 368–390, 397–417, 435–455, and 473–493; these read LFSY…PGNF, ELLW…SLAA, FILW…EVIG, IPVW…LLLQ, LEFL…VELG, ISLL…ALVL, AFAL…SGAV, LFAV…TYAG, WIRN…IIGG, LIII…VPLL, ISVI…YFLI, and VFSG…ILYL. The tract at residues 523 to 550 is disordered; sequence GEGSLGHLPREDISSMQLPQQRTASDLD. Residues 536–550 show a composition bias toward polar residues; sequence SSMQLPQQRTASDLD.

Belongs to the NRAMP (TC 2.A.55) family.

The protein localises to the membrane. Its function is as follows. Probable metal transporter. The sequence is that of Metal transporter Nramp3 (NRAMP3) from Oryza sativa subsp. japonica (Rice).